The chain runs to 228 residues: Cytochrome b6-f complex iron-sulfur subunit 1, chloroplastic (228 aa).

The transit peptide at Met1–Met49 directs the protein to the chloroplast. Residues Leu72–Val92 form a helical membrane-spanning segment. The 97-residue stretch at Ala115–Phe211 folds into the Rieske domain. The [2Fe-2S] cluster site is built by Cys157, His159, Cys175, and His178. A disulfide bond links Cys162 and Cys177.

This sequence belongs to the Rieske iron-sulfur protein family. As to quaternary structure, the 4 large subunits of the cytochrome b6-f complex are cytochrome b6, subunit IV (17 kDa polypeptide, petD), cytochrome f and the Rieske protein, while the 4 small subunits are petG, petL, petM and petN. The complex functions as a dimer. [2Fe-2S] cluster is required as a cofactor.

Its subcellular location is the plastid. The protein localises to the chloroplast thylakoid membrane. The catalysed reaction is 2 oxidized [plastocyanin] + a plastoquinol + 2 H(+)(in) = 2 reduced [plastocyanin] + a plastoquinone + 4 H(+)(out). Functionally, component of the cytochrome b6-f complex, which mediates electron transfer between photosystem II (PSII) and photosystem I (PSI), cyclic electron flow around PSI, and state transitions. This chain is Cytochrome b6-f complex iron-sulfur subunit 1, chloroplastic (petC1), found in Nicotiana tabacum (Common tobacco).